The primary structure comprises 54 residues: Apelin receptor early endogenous ligand (54 aa).

A signal peptide spans 1–23 (MRFQPLFWVFFIFAMSLLFISEQ).

The protein belongs to the Elabela/Toddler family. As to quaternary structure, interacts with APLNR. Expressed in the placenta. Expressed in syncytiotrophoblasts of the placenta labyrinth at 10.5 dpc. Expressed in placental chorionic trophoblasts (at protein level). Expressed in a small population of epiblast cells in the distal half of the embryo at 7 dpc. Expressed in newly formed definitive endoderm cells in the proximal half of the embryo, while it is not present in extra-embryonic endoderm at 7.5 dpc. This expression pattern then changes to the ventral aspect of the developing foregut pocket and the entire hindgut pocket at 8.5 dpc, before becoming restricted to the foregut overlying the heart and the posterior-most hindgut. Not detected in endothelial precursor cells of the yolk sac at 8 dpc. Expressed in extraembryonic tissues as well as in the chorion at 8.25 dpc. Expressed in endometrial stroma of the uterus of pregnant mice at 8.5 dpc. Expressed in the developing heart, caudal neural tube and trophobasts at 9 dpc. Expressed in the chorionic plate of the chorioallantoic placenta at 9 dpc. Expressed in the posterior half of the ventral neural tube at 9.25 dpc. Expressed in trophoblast cells at the periphery of the placenta at 9.5 dpc. Expressed in collecting ducts of the kidney of pregnant mice at 10.5 dpc. Expressed in the epicardium of the developing heart at 11.5 dpc. Expressed weakly in the adult heart. Expressed in endothelial cells and fibroblasts and weakly in cardiomyocytes.

It is found in the secreted. The protein resides in the extracellular space. Its function is as follows. Peptide hormone that functions as endogenous ligand for the G-protein-coupled apelin receptor (APLNR/APJ), that plays a role in the regulation of normal cardiovascular function and fluid homeostasis. Functions as a balanced agonist activating both G(i) protein pathway and beta-arrestin pathway of APLNR. Downstream G proteins activation, apelin can inhibit cAMP production and activate key intracellular effectors such as ERKs. On the other hand, APLNR activation induces beta-arrestin recruitment to the membrane leading to desensitization and internalization of the receptor. Required for mesendodermal differentiation, blood vessels formation and heart morphogenesis during early development and for adult cardiovascular homeostasis. Acts as a motogen by promoting mesendodermal cell migration during gastrulation by binding and activating APLNR. Acts as an early embryonic regulator of cellular movement with a role in migration and development of cardiac progenitor cells. May act as a chemoattractant for the activation of angioblast migration toward the embryonic midline, i.e. the position of the future vessel formation, during vasculogenesis. Positively regulates sinus venosus (SV)-derived endothelial cells migration into the developing heart to promote coronary blood vessel sprouting. Plays a role in placental vascular development; promotes placental trophoblast invasion and spiral artery remodeling in the uterus. Involved in the regulation of maternal cardiovascular homeostasis to prevent gestational hypertension and for potent cardioprotective functions during heart failure. Mediates myocardial contractility in an ERK1/2-dependent manner. This is Apelin receptor early endogenous ligand from Mus musculus (Mouse).